The following is a 144-amino-acid chain: MTIERTFSIVKPDAVKRNLIGAIYRRIEKTGMQIVAAKMLRLTKEQAEGFYAEHEGKEFFDELVAYMMSGPVMVQVLEGENAVVRYRELMGKTNPEEAACGSLRADYAISMRYNSVHGADSPESAAREIAYFFAEDEICPRPVE.

Residues Lys-11, Phe-59, Arg-87, Thr-93, Arg-104, and Asn-114 each coordinate ATP. Catalysis depends on His-117, which acts as the Pros-phosphohistidine intermediate.

It belongs to the NDK family. In terms of assembly, homotetramer. Mg(2+) is required as a cofactor.

It is found in the cytoplasm. It carries out the reaction a 2'-deoxyribonucleoside 5'-diphosphate + ATP = a 2'-deoxyribonucleoside 5'-triphosphate + ADP. The enzyme catalyses a ribonucleoside 5'-diphosphate + ATP = a ribonucleoside 5'-triphosphate + ADP. Functionally, major role in the synthesis of nucleoside triphosphates other than ATP. The ATP gamma phosphate is transferred to the NDP beta phosphate via a ping-pong mechanism, using a phosphorylated active-site intermediate. This chain is Nucleoside diphosphate kinase, found in Aliivibrio fischeri (strain MJ11) (Vibrio fischeri).